The primary structure comprises 461 residues: tRNA modification GTPase MnmE (461 aa).

Residues R20, E85, and K124 each coordinate (6S)-5-formyl-5,6,7,8-tetrahydrofolate. Residues 221–383 enclose the TrmE-type G domain; the sequence is GIPVAIIGET…LQQLLTEVSS (163 aa). N231 is a K(+) binding site. GTP contacts are provided by residues 231 to 236, 250 to 256, and 275 to 278; these read NAGKST, SDIHGTT, and DTAG. Mg(2+) is bound at residue S235. Residues S250, I252, and T255 each contribute to the K(+) site. Position 256 (T256) interacts with Mg(2+). (6S)-5-formyl-5,6,7,8-tetrahydrofolate is bound at residue K461.

This sequence belongs to the TRAFAC class TrmE-Era-EngA-EngB-Septin-like GTPase superfamily. TrmE GTPase family. Homodimer. Heterotetramer of two MnmE and two MnmG subunits. Requires K(+) as cofactor.

It localises to the cytoplasm. Exhibits a very high intrinsic GTPase hydrolysis rate. Involved in the addition of a carboxymethylaminomethyl (cmnm) group at the wobble position (U34) of certain tRNAs, forming tRNA-cmnm(5)s(2)U34. The polypeptide is tRNA modification GTPase MnmE (Parabacteroides distasonis (strain ATCC 8503 / DSM 20701 / CIP 104284 / JCM 5825 / NCTC 11152)).